A 361-amino-acid polypeptide reads, in one-letter code: Tyrosine--tRNA ligase (361 aa).

L-tyrosine is bound by residues tyrosine 36, tyrosine 162, glutamine 166, aspartate 169, and glutamine 184. A 'KMSKS' region motif is present at residues 236–240; the sequence is KMSKS. Lysine 239 is a binding site for ATP.

Belongs to the class-I aminoacyl-tRNA synthetase family. TyrS type 4 subfamily. Homodimer.

Its subcellular location is the cytoplasm. The catalysed reaction is tRNA(Tyr) + L-tyrosine + ATP = L-tyrosyl-tRNA(Tyr) + AMP + diphosphate + H(+). Its function is as follows. Catalyzes the attachment of tyrosine to tRNA(Tyr) in a two-step reaction: tyrosine is first activated by ATP to form Tyr-AMP and then transferred to the acceptor end of tRNA(Tyr). The protein is Tyrosine--tRNA ligase of Saccharolobus islandicus (strain M.14.25 / Kamchatka #1) (Sulfolobus islandicus).